A 721-amino-acid chain; its full sequence is Protein mu-NS (721 aa).

Residues 1–13 (MASFKGFSANTVP) are interaction with sigma-NS. Residues 1-38 (MASFKGFSANTVPVSKTRKDTSSLTATPGLRAPSMSSP) are RNA-binding. Residues 14–40 (VSKTRKDTSSLTATPGLRAPSMSSPVD) are interaction with mu-2. The interval 17-37 (TRKDTSSLTATPGLRAPSMSS) is disordered. The interval 471–721 (QSDTVDGIKL…IDFSVPADEL (251 aa)) is involved in the formation of factory-like inclusions. 2 coiled-coil regions span residues 523–556 (LLSQ…ADVK) and 632–686 (KQAH…NQRQ).

This sequence belongs to the orthoreovirus mu-NS protein family. Interacts with mu-2. Interacts with sigma-NS; in viral factories. Interacts with the inner capsid proteins lambda-1 and sigma-2, and outer capsid protein lambda-2; in viral factories. Post-translationally, the N-terminus is blocked.

It localises to the host cytoplasm. Functionally, non-structural protein implicated with protein sigma-NS in forming the matrix of viral factories, which are large inclusions in the host cytoplasm where replication intermediates are assembled and viral RNA replication takes place. Together with mu-2, recruits the other core proteins to these factories. The protein is Protein mu-NS (M3) of Mammalia (T2J).